The following is a 232-amino-acid chain: Phosphatidylserine decarboxylase proenzyme (232 aa).

The active-site Schiff-base intermediate with substrate; via pyruvic acid is the S190. The residue at position 190 (S190) is a Pyruvic acid (Ser); by autocatalysis.

It belongs to the phosphatidylserine decarboxylase family. PSD-A subfamily. In terms of assembly, heterodimer of a large membrane-associated beta subunit and a small pyruvoyl-containing alpha subunit. The cofactor is pyruvate. Post-translationally, is synthesized initially as an inactive proenzyme. Formation of the active enzyme involves a self-maturation process in which the active site pyruvoyl group is generated from an internal serine residue via an autocatalytic post-translational modification. Two non-identical subunits are generated from the proenzyme in this reaction, and the pyruvate is formed at the N-terminus of the alpha chain, which is derived from the carboxyl end of the proenzyme. The post-translation cleavage follows an unusual pathway, termed non-hydrolytic serinolysis, in which the side chain hydroxyl group of the serine supplies its oxygen atom to form the C-terminus of the beta chain, while the remainder of the serine residue undergoes an oxidative deamination to produce ammonia and the pyruvoyl prosthetic group on the alpha chain.

The protein localises to the cell membrane. The catalysed reaction is a 1,2-diacyl-sn-glycero-3-phospho-L-serine + H(+) = a 1,2-diacyl-sn-glycero-3-phosphoethanolamine + CO2. It participates in phospholipid metabolism; phosphatidylethanolamine biosynthesis; phosphatidylethanolamine from CDP-diacylglycerol: step 2/2. Its function is as follows. Catalyzes the formation of phosphatidylethanolamine (PtdEtn) from phosphatidylserine (PtdSer). In Rhodopseudomonas palustris (strain BisB5), this protein is Phosphatidylserine decarboxylase proenzyme.